The sequence spans 208 residues: Large ribosomal subunit protein uL3c (208 aa).

Residues Thr129–Leu165 form a disordered region.

Belongs to the universal ribosomal protein uL3 family. Part of the 50S ribosomal subunit.

Its subcellular location is the plastid. The protein resides in the chloroplast. Functionally, one of the primary rRNA binding proteins, it binds directly near the 3'-end of the 23S rRNA, where it nucleates assembly of the 50S subunit. In Rhodomonas salina (Cryptomonas salina), this protein is Large ribosomal subunit protein uL3c (rpl3).